Reading from the N-terminus, the 714-residue chain is Elongation factor G-like protein (714 aa).

Residues 21-289 (GGVRNVVLVG…VATRGFPSPM (269 aa)) form the tr-type G domain. The segment at 30–37 (GPSGGGKT) is G1. 30-37 (GPSGGGKT) lines the GTP pocket. Residues 73–77 (QRSVG) are G2. The interval 94 to 97 (DTPG) is G3. Residues 94 to 98 (DTPGY) and 148 to 151 (TKLD) each bind GTP. A G4 region spans residues 148–151 (TKLD). Positions 267-269 (CSS) are G5.

This sequence belongs to the TRAFAC class translation factor GTPase superfamily. Classic translation factor GTPase family. EF-G/EF-2 subfamily.

In Mycobacterium tuberculosis (strain CDC 1551 / Oshkosh), this protein is Elongation factor G-like protein.